Consider the following 128-residue polypeptide: Fatty acid binding protein 1-B.1 (128 aa).

It belongs to the calycin superfamily. Fatty-acid binding protein (FABP) family. Expressed in the yolk syncytial layer (YSL) and subsequently in the intestinal bulb in developing embryos and larvae. In adults, expressed in the intestine.

It is found in the cytoplasm. In terms of biological role, binds free fatty acids and their coenzyme A derivatives, bilirubin, and some other small molecules in the cytoplasm. May be involved in intracellular lipid transport. The sequence is that of Fatty acid binding protein 1-B.1 (fabp1b.1) from Danio rerio (Zebrafish).